Consider the following 246-residue polypeptide: Putative outer membrane protein YiaT (246 aa).

Residues 1-21 (MLINRNIVALFALPFMASATA) form the signal peptide.

It belongs to the MipA/OmpV family.

It localises to the cell outer membrane. This is Putative outer membrane protein YiaT (yiaT) from Escherichia coli (strain K12).